The primary structure comprises 319 residues: MEHCTFNLPDVQASKPSIAINLTRVGVTNVKKLVEIKRKDKRPIVLISTFDVFVDLPSDRKGANLSRNFEAVDEVLEKILSMPVYEIEQLCSDIAHNLLGRHEYANQAEVRMTSEYMIRRASPATGIKCQEVVNIFAEASAVRGQGNDDYFDVKKLIGAEVVGMTACPCAQEIMRDKAANELSELGVDKDTIIKFLERVPMATHNQRGRGIISIKVAHDFDVSLESIISIIDHSMSSSVYEVLKRADEKVVVETAHMNPKFVEDCVRTMADNVVKEFPNLPDNAVITIKQTNEESIHRHNAYAERVALMGDLRSEINHC.

Belongs to the GTP cyclohydrolase IV family. In terms of assembly, homodimer. Fe(2+) serves as cofactor.

The enzyme catalyses GTP + H2O = 7,8-dihydroneopterin 2',3'-cyclic phosphate + formate + diphosphate + H(+). It participates in cofactor biosynthesis; 5,6,7,8-tetrahydromethanopterin biosynthesis. Converts GTP to 7,8-dihydro-D-neopterin 2',3'-cyclic phosphate, the first intermediate in the biosynthesis of coenzyme methanopterin. This chain is GTP cyclohydrolase MptA, found in Methanosarcina barkeri (strain Fusaro / DSM 804).